The chain runs to 232 residues: Ribonuclease 3 (232 aa).

The region spanning 6 to 133 (LKEIEENLGV…IIAAVYLDKG (128 aa)) is the RNase III domain. E46 is a Mg(2+) binding site. D50 is a catalytic residue. Positions 119 and 122 each coordinate Mg(2+). E122 is a catalytic residue. A DRBM domain is found at 160–229 (DFKTKLQELL…AKQALDILEG (70 aa)).

The protein belongs to the ribonuclease III family. As to quaternary structure, homodimer. It depends on Mg(2+) as a cofactor.

The protein resides in the cytoplasm. It catalyses the reaction Endonucleolytic cleavage to 5'-phosphomonoester.. Digests double-stranded RNA. Involved in the processing of primary rRNA transcript to yield the immediate precursors to the large and small rRNAs (23S and 16S). Processes some mRNAs, and tRNAs when they are encoded in the rRNA operon. Processes pre-crRNA and tracrRNA of type II CRISPR loci if present in the organism. The chain is Ribonuclease 3 from Clostridium beijerinckii (strain ATCC 51743 / NCIMB 8052) (Clostridium acetobutylicum).